The following is a 458-amino-acid chain: Hyaluronidase conohyal-P1 (458 aa).

Positions 1–18 are cleaved as a signal peptide; the sequence is MRVVVVVTGLVVVVVATA. The disordered stretch occupies residues 24–47; sequence HDVKSASSPLSSSSVYQGSSGDDC. Low complexity predominate over residues 28-43; it reads SASSPLSSSSVYQGSS. Cysteine 68 and cysteine 342 are disulfide-bonded. N-linked (GlcNAc...) asparagine glycosylation is found at asparagine 106 and asparagine 141. The active-site Proton donor is glutamate 151. Asparagine 261, asparagine 337, and asparagine 359 each carry an N-linked (GlcNAc...) asparagine glycan. Residues 363–434 enclose the EGF-like domain; sequence VMADCSTTLC…VRPSRCHKQQ (72 aa). 3 disulfides stabilise this stretch: cysteine 367/cysteine 378, cysteine 372/cysteine 411, and cysteine 413/cysteine 422.

The protein belongs to the glycosyl hydrolase 56 family. In terms of tissue distribution, expressed by the venom duct.

The protein resides in the secreted. It carries out the reaction Random hydrolysis of (1-&gt;4)-linkages between N-acetyl-beta-D-glucosamine and D-glucuronate residues in hyaluronate.. Its function is as follows. Hyaluronidase catalyzes the hydrolysis of hyaluronic acid (HA), an anionic, nonsulfated glycosaminoglycan distributed widely throughout connective, epithelial, and neural tissues. In venom, they are known to enhance diffusion of the venom by degrading the extracellular matrix. The sequence is that of Hyaluronidase conohyal-P1 from Conus purpurascens (Purple cone).